A 268-amino-acid chain; its full sequence is Lectin ESA-2 (268 aa).

4 consecutive repeat copies span residues 1–67 (GRYT…RRGE), 68–135 (SNVY…QSGG), 136–202 (DTYN…LSGA), and 203–268 (NNYS…VATS). Residues 1–268 (GRYTVQNQWG…PIGFKGVATS (268 aa)) form a 4 X approximate tandem repeats region.

Monomer.

Its function is as follows. Lectin specific for high mannose N-glycans, recognizes the branched moiety of these glycans. Does not recognize other types of N-glycans or monosaccharides. Agglutinates trypsin-treated sheep and rabbit erythrocytes and untreated sheep erythrocytes. Has mitogenic activity on mouse lymphocytes. Does not require metal ions for activity. This is Lectin ESA-2 from Eucheuma serra (Marine red alga).